A 199-amino-acid polypeptide reads, in one-letter code: MRPPRCVGRTQGIPLGLLAFWVATARCLQSQGVSLYIPRSAINATVQEDILLSVDYICHGVPTIEWEYTPNWGVQKIVEWKPGTPANVSQSHRDRVCTFDNGSIQLFSVGVRDSGYYVITVTEHPGSSQSGTILLHVSEIRYEDLHFVAVFFALLAAVAVVLISLMWVCNQCAYKFQRKRRYKLRESTTEEIEMKDVEC.

A signal peptide spans Met-1–Cys-27. The Extracellular segment spans residues Leu-28–His-146. The 103-residue stretch at Tyr-36–Ser-138 folds into the Ig-like C2-type domain. 3 N-linked (GlcNAc...) asparagine glycosylation sites follow: Asn-43, Asn-87, and Asn-101. The helical transmembrane segment at Phe-147–Trp-167 threads the bilayer. Topologically, residues Val-168 to Cys-199 are cytoplasmic. The interval Cys-169–Arg-185 is important for CDC42-dependent filopodia induction.

As to quaternary structure, can homooligomerize through cis interactions within the same cell membrane. In terms of processing, N-glycosylated.

The protein resides in the cell membrane. Its subcellular location is the cell projection. It is found in the dendrite. It localises to the axon. Functionally, cell adhesion-like membrane protein of the central nervous system (CNS) which modulates both the position and complexity of central neurons by altering their membrane morphology and dynamics. Involved in the formation of neuronal dendrites and protrusions including dendritic filopodia. In synaptogenesis, regulates synapse formation by altering dendritic spine morphology and actin distribution. Promotes formation of unstable neuronal spines such as thin and branched types. Regulates neuronal morphogenesis and migration during cortical development in the brain. The protein is V-set and transmembrane domain-containing protein 5 (Vstm5) of Rattus norvegicus (Rat).